The following is a 202-amino-acid chain: Nucleoid occlusion factor SlmA (202 aa).

Positions 14–75 (KERQQQVLEV…ALIERIEQTL (62 aa)) constitute an HTH tetR-type domain. A DNA-binding region (H-T-H motif) is located at residues 38–57 (TTERLAKAVGVSEGALYRYF).

It belongs to the nucleoid occlusion factor SlmA family. In terms of assembly, homodimer. Interacts with FtsZ.

It is found in the cytoplasm. Its subcellular location is the nucleoid. Required for nucleoid occlusion (NO) phenomenon, which prevents Z-ring formation and cell division over the nucleoid. Acts as a DNA-associated cell division inhibitor that binds simultaneously chromosomal DNA and FtsZ, and disrupts the assembly of FtsZ polymers. SlmA-DNA-binding sequences (SBS) are dispersed on non-Ter regions of the chromosome, preventing FtsZ polymerization at these regions. The protein is Nucleoid occlusion factor SlmA of Haemophilus ducreyi (strain 35000HP / ATCC 700724).